The following is a 675-amino-acid chain: Metal-nicotianamine transporter YSL3 (675 aa).

Helical transmembrane passes span I42 to M62, L66 to L86, C114 to L134, G159 to V179, V219 to F239, I280 to I300, V325 to F345, I386 to I406, I408 to L428, V450 to V470, V504 to F524, F556 to A576, F602 to W622, and A630 to L650.

This sequence belongs to the YSL (TC 2.A.67.2) family. In terms of tissue distribution, expressed in leaves, anthers and pollen grains. Restricted to the vasculature.

Its subcellular location is the membrane. Its function is as follows. May be involved in the lateral transport of nicotianamine-chelated metals in the vasculature. The sequence is that of Metal-nicotianamine transporter YSL3 (YSL3) from Arabidopsis thaliana (Mouse-ear cress).